Consider the following 269-residue polypeptide: Thymidylate synthase (269 aa).

Arg26 contributes to the dUMP binding site. His56 lines the (6R)-5,10-methylene-5,6,7,8-tetrahydrofolate pocket. 131–132 (RR) serves as a coordination point for dUMP. Cys151 functions as the Nucleophile in the catalytic mechanism. DUMP-binding positions include 171–174 (RSAD), Asn182, and 212–214 (HIY). Asp174 lines the (6R)-5,10-methylene-5,6,7,8-tetrahydrofolate pocket. Ala268 is a (6R)-5,10-methylene-5,6,7,8-tetrahydrofolate binding site.

The protein belongs to the thymidylate synthase family. Bacterial-type ThyA subfamily. In terms of assembly, homodimer.

It is found in the cytoplasm. The catalysed reaction is dUMP + (6R)-5,10-methylene-5,6,7,8-tetrahydrofolate = 7,8-dihydrofolate + dTMP. It participates in pyrimidine metabolism; dTTP biosynthesis. Catalyzes the reductive methylation of 2'-deoxyuridine-5'-monophosphate (dUMP) to 2'-deoxythymidine-5'-monophosphate (dTMP) while utilizing 5,10-methylenetetrahydrofolate (mTHF) as the methyl donor and reductant in the reaction, yielding dihydrofolate (DHF) as a by-product. This enzymatic reaction provides an intracellular de novo source of dTMP, an essential precursor for DNA biosynthesis. The chain is Thymidylate synthase from Leifsonia xyli subsp. xyli (strain CTCB07).